A 355-amino-acid polypeptide reads, in one-letter code: Alanine racemase (355 aa).

K34 (proton acceptor; specific for D-alanine) is an active-site residue. K34 carries the N6-(pyridoxal phosphate)lysine modification. R133 contributes to the substrate binding site. Y249 (proton acceptor; specific for L-alanine) is an active-site residue. M297 contributes to the substrate binding site.

The protein belongs to the alanine racemase family. Requires pyridoxal 5'-phosphate as cofactor.

It carries out the reaction L-alanine = D-alanine. Its pathway is amino-acid biosynthesis; D-alanine biosynthesis; D-alanine from L-alanine: step 1/1. Catalyzes the interconversion of L-alanine and D-alanine. May also act on other amino acids. This chain is Alanine racemase (alr), found in Rickettsia akari (strain Hartford).